Consider the following 215-residue polypeptide: Probable phosphoglycerate mutase GpmB (215 aa).

Substrate contacts are provided by residues 8 to 15, 21 to 22, R58, R60, 82 to 85, 104 to 105, and 151 to 152; these read RHGETQWN, QG, ELNM, RR, and GI. The active-site Tele-phosphohistidine intermediate is the H9. The Proton donor/acceptor role is filled by E82.

This sequence belongs to the phosphoglycerate mutase family. GpmB subfamily.

It catalyses the reaction (2R)-2-phosphoglycerate = (2R)-3-phosphoglycerate. It functions in the pathway carbohydrate degradation; glycolysis; pyruvate from D-glyceraldehyde 3-phosphate: step 3/5. In Escherichia coli O9:H4 (strain HS), this protein is Probable phosphoglycerate mutase GpmB.